The sequence spans 246 residues: MGGAMSIYLGVNIDHIATLRQARKTRYPSPVEAALAAETAGADSITLHLREDRRHIQDADVTILRQTLKTKMNLEMAVTEEMLGIALETRPSDVCLVPEKREELTTEGGLDVAGQQAKMRDACARLGDAGIRVSLFIDADFAQLDAAHAAGAPVVEIHTGHYADAASDAARAAEFERIRRAVAYGRSLGLTVNAGHGLTYHNVQPIAALPGIHELNIGHAIVAQALFVGWKEAVAEMKRLMVAAAG.

Residue Asn12 participates in 3-amino-2-oxopropyl phosphate binding. 14–15 (DH) lines the 1-deoxy-D-xylulose 5-phosphate pocket. 3-amino-2-oxopropyl phosphate is bound at residue Arg23. Residue His48 is the Proton acceptor of the active site. Positions 50 and 55 each coordinate 1-deoxy-D-xylulose 5-phosphate. Catalysis depends on Glu75, which acts as the Proton acceptor. Thr105 contacts 1-deoxy-D-xylulose 5-phosphate. His196 (proton donor) is an active-site residue. Residues Gly197 and 218–219 (GH) each bind 3-amino-2-oxopropyl phosphate.

It belongs to the PNP synthase family. In terms of assembly, homooctamer; tetramer of dimers.

The protein resides in the cytoplasm. It carries out the reaction 3-amino-2-oxopropyl phosphate + 1-deoxy-D-xylulose 5-phosphate = pyridoxine 5'-phosphate + phosphate + 2 H2O + H(+). Its pathway is cofactor biosynthesis; pyridoxine 5'-phosphate biosynthesis; pyridoxine 5'-phosphate from D-erythrose 4-phosphate: step 5/5. In terms of biological role, catalyzes the complicated ring closure reaction between the two acyclic compounds 1-deoxy-D-xylulose-5-phosphate (DXP) and 3-amino-2-oxopropyl phosphate (1-amino-acetone-3-phosphate or AAP) to form pyridoxine 5'-phosphate (PNP) and inorganic phosphate. The polypeptide is Pyridoxine 5'-phosphate synthase (Thiobacillus denitrificans (strain ATCC 25259 / T1)).